A 405-amino-acid chain; its full sequence is Amino acid transporter AVT1I (405 aa).

The next 11 membrane-spanning stretches (helical) occupy residues 22-42, 46-66, 93-113, 140-160, 169-189, 201-221, 234-254, 278-298, 318-338, 343-363, and 377-397; these read CFNA…YSLA, WLSL…SLLI, IIVS…FLIL, FMAT…LSVL, LATT…GIGF, IPTA…LPTL, VLLI…VLGY, VAIY…ITPT, LLIS…LPFF, SLVG…LCYL, and IMLF…TYIA.

Belongs to the amino acid/polyamine transporter 2 family. Amino acid/auxin permease (AAAP) (TC 2.A.18.5) subfamily.

It is found in the membrane. The chain is Amino acid transporter AVT1I from Arabidopsis thaliana (Mouse-ear cress).